Consider the following 532-residue polypeptide: Pentatricopeptide repeat-containing protein At4g02820, mitochondrial (532 aa).

The N-terminal 28 residues, 1–28 (MNKNMLVRSARPTLASIHRLFSAAAAAT), are a transit peptide targeting the mitochondrion. The segment at 35–56 (PVVKPRSGGGKGGESANKKETV) is disordered. PPR repeat units follow at residues 161–195 (GHAA…GFLK), 196–226 (SCLP…LKIR), 230–264 (DIVT…KLNP), 265–295 (DWVT…MEKL), 300–330 (NRVA…VKSS), 335–365 (NDAE…WESV), 370–404 (DARI…GINP), 405–435 (SYST…AIDS), 442–472 (NVRL…LQKA), and 476–512 (NTQL…DEET).

The protein belongs to the PPR family. P subfamily.

The protein localises to the mitochondrion. The polypeptide is Pentatricopeptide repeat-containing protein At4g02820, mitochondrial (Arabidopsis thaliana (Mouse-ear cress)).